A 72-amino-acid chain; its full sequence is DNA-directed RNA polymerase subunit epsilon (72 aa).

This sequence belongs to the RNA polymerase subunit epsilon family. RNAP is composed of a core of 2 alpha, a beta and a beta' subunit. The core is associated with a delta subunit, and at least one of epsilon or omega. When a sigma factor is associated with the core the holoenzyme is formed, which can initiate transcription.

The catalysed reaction is RNA(n) + a ribonucleoside 5'-triphosphate = RNA(n+1) + diphosphate. In terms of biological role, a non-essential component of RNA polymerase (RNAP). The sequence is that of DNA-directed RNA polymerase subunit epsilon from Staphylococcus aureus (strain JH1).